The sequence spans 312 residues: Aquaglyceroporin-2 (312 aa).

Transmembrane regions (helical) follow at residues 78–98 (FLGN…SLLV), 104–124 (LGLT…SLGI), 151–171 (YIAA…GVFA), 203–223 (GIFY…LCVC), 239–259 (VAIG…SPLA), and 286–306 (YYFW…LFLY).

Belongs to the MIP/aquaporin (TC 1.A.8) family.

The protein resides in the membrane. It catalyses the reaction glycerol(in) = glycerol(out). The catalysed reaction is H2O(in) = H2O(out). It carries out the reaction urea(in) = urea(out). In terms of biological role, mediates water and glycerol transport across cell membranes. Permeable to urea. Permeable to methylamine/methylammonium. Permeable to dihydroxyacetone. The polypeptide is Aquaglyceroporin-2 (Trypanosoma brucei brucei).